A 359-amino-acid polypeptide reads, in one-letter code: Nicotinate N-methyltransferase 1 (359 aa).

S-adenosyl-L-methionine is bound at residue aspartate 226.

Belongs to the class I-like SAM-binding methyltransferase superfamily. Cation-independent O-methyltransferase family. As to expression, highly expressed in anthers, pistils, developing siliques, and developing seeds.

It is found in the cytoplasm. The protein localises to the cytosol. The enzyme catalyses nicotinate + S-adenosyl-L-methionine = N-methylnicotinate + S-adenosyl-L-homocysteine. Involved in nicotinate detoxification in planta. Catalyzes the conversion of nicotinate to N-methylnicotinate, which is a detoxified form of endogenous nicotinate in planta. The chain is Nicotinate N-methyltransferase 1 from Arabidopsis thaliana (Mouse-ear cress).